The sequence spans 315 residues: Porphobilinogen deaminase (315 aa).

S-(dipyrrolylmethanemethyl)cysteine is present on cysteine 245.

The protein belongs to the HMBS family. In terms of assembly, monomer. The cofactor is dipyrromethane.

It catalyses the reaction 4 porphobilinogen + H2O = hydroxymethylbilane + 4 NH4(+). It participates in porphyrin-containing compound metabolism; protoporphyrin-IX biosynthesis; coproporphyrinogen-III from 5-aminolevulinate: step 2/4. Its pathway is porphyrin-containing compound metabolism; chlorophyll biosynthesis. Functionally, tetrapolymerization of the monopyrrole PBG into the hydroxymethylbilane pre-uroporphyrinogen in several discrete steps. The protein is Porphobilinogen deaminase of Prochlorococcus marinus (strain NATL1A).